The following is a 162-amino-acid chain: Caveolin-2 (162 aa).

Over 1–86 (MGLETEKADV…FEISKYVIYK (86 aa)) the chain is Cytoplasmic. Tyrosine 19 carries the phosphotyrosine; by SRC modification. Residues serine 20 and serine 23 each carry the phosphoserine modification. A Phosphotyrosine; by SRC modification is found at tyrosine 27. The segment at residues 87–107 (FLTVFLAIPLAFVAGILFATL) is an intramembrane region (helical). Residues 108–162 (SCLHIWIIMPFVKTCLMLLPSVQTIWKSVTDVVIAPLCTSAGRSFSSVSLQLSHD) are Cytoplasmic-facing.

The protein belongs to the caveolin family. As to quaternary structure, monomer or homodimer. Interacts with CAV1; the interaction forms a stable heterooligomeric complex that is required for targeting to lipid rafts and for caveolae formation. Tyrosine phosphorylated forms do not form heterooligomers with the Tyr-19-phosphorylated form existing as a monomer or dimer, and the Tyr-27-form as a monomer only. Interacts (tyrosine phosphorylated form) with the SH2 domain-containing proteins, RASA1, NCK1 and SRC. Interacts (tyrosine phosphorylated form) with INSR, the interaction (Tyr-27-phosphorylated form) is increased on insulin stimulation. Interacts (Tyr-19 phosphorylated form) with MAPK1 (phosphorylated form); the interaction, promoted by insulin, leads to nuclear location and MAPK1 activation. Interacts with STAT3; the interaction is increased on insulin-induced tyrosine phosphorylation leading to STAT activation. Phosphorylated on serine and tyrosine residues. CAV1 promotes phosphorylation on Ser-23 which then targets the complex to the plasma membrane, lipid rafts and caveolae. Phosphorylation on both Tyr-19 and Tyr-27 is required for insulin-induced 'Ser-727' phosphorylation of STAT3 and its activation. Phosphorylation on Tyr-19 is required for insulin-induced phosphorylation of MAPK1 and DNA binding of STAT3. Tyrosine phosphorylation is induced by both EGF and insulin.

The protein localises to the nucleus. The protein resides in the cytoplasm. Its subcellular location is the golgi apparatus membrane. It is found in the cell membrane. It localises to the membrane. The protein localises to the caveola. Functionally, may act as a scaffolding protein within caveolar membranes. Interacts directly with G-protein alpha subunits and can functionally regulate their activity. Acts as an accessory protein in conjunction with CAV1 in targeting to lipid rafts and driving caveolae formation. Positive regulator of cellular mitogenesis of the MAPK signaling pathway. Required for the insulin-stimulated nuclear translocation and activation of MAPK1 and STAT3, and the subsequent regulation of cell cycle progression. The sequence is that of Caveolin-2 (CAV2) from Equus caballus (Horse).